The primary structure comprises 88 residues: UPF0147 protein Ta0600 (88 aa).

Belongs to the UPF0147 family.

The chain is UPF0147 protein Ta0600 from Thermoplasma acidophilum (strain ATCC 25905 / DSM 1728 / JCM 9062 / NBRC 15155 / AMRC-C165).